A 273-amino-acid polypeptide reads, in one-letter code: Aliphatic sulfonates import ATP-binding protein SsuB 2 (273 aa).

The ABC transporter domain occupies 17–241 (LLDLRITRKL…PRDRRDPTLA (225 aa)). 50 to 57 (GPSGCGKS) contacts ATP.

Belongs to the ABC transporter superfamily. Aliphatic sulfonates importer (TC 3.A.1.17.2) family. The complex is composed of two ATP-binding proteins (SsuB), two transmembrane proteins (SsuC) and a solute-binding protein (SsuA).

It localises to the cell inner membrane. The catalysed reaction is ATP + H2O + aliphatic sulfonate-[sulfonate-binding protein]Side 1 = ADP + phosphate + aliphatic sulfonateSide 2 + [sulfonate-binding protein]Side 1.. In terms of biological role, part of the ABC transporter complex SsuABC involved in aliphatic sulfonates import. Responsible for energy coupling to the transport system. The chain is Aliphatic sulfonates import ATP-binding protein SsuB 2 from Burkholderia lata (strain ATCC 17760 / DSM 23089 / LMG 22485 / NCIMB 9086 / R18194 / 383).